The primary structure comprises 92 residues: PqqA binding protein (92 aa).

It belongs to the PqqD family. Monomer. Interacts with PqqE.

Its pathway is cofactor biosynthesis; pyrroloquinoline quinone biosynthesis. Functionally, functions as a PqqA binding protein and presents PqqA to PqqE, in the pyrroloquinoline quinone (PQQ) biosynthetic pathway. This Stutzerimonas stutzeri (strain A1501) (Pseudomonas stutzeri) protein is PqqA binding protein.